The sequence spans 44 residues: Iota-conotoxin-like R11.11 (44 aa).

Intrachain disulfides connect Cys-5/Cys-19, Cys-12/Cys-22, Cys-18/Cys-27, and Cys-21/Cys-36. Residue Arg-44 is a propeptide, removed by a carboxypeptidase.

It belongs to the conotoxin I1 superfamily. Expressed by the venom duct.

The protein localises to the secreted. Iota-conotoxins bind to voltage-gated sodium channels (Nav) and act as agonists by shifting the voltage-dependence of activation to more hyperpolarized levels. Produces general excitatory symptoms. In Conus radiatus (Rayed cone), this protein is Iota-conotoxin-like R11.11.